The primary structure comprises 472 residues: Radical SAM cyclopropyl synthase TigE (472 aa).

In terms of domain architecture, Radical SAM core spans 106-331 (GEQIKAIQLV…VIDLYEYGLD (226 aa)). Positions 120, 124, 127, 339, 360, 378, 414, 417, 423, 427, and 446 each coordinate [4Fe-4S] cluster.

This sequence belongs to the radical SAM superfamily. The cofactor is [4Fe-4S] cluster.

It carries out the reaction L-isoleucyl-[protein] + AH2 + 2 S-adenosyl-L-methionine = methylcyclopropylglycine-[protein] + 2 5'-deoxyadenosine + 2 L-methionine + A + 2 H(+). Radical S-adenosylmethionine (SAM) enzyme that catalyzes the formation of methylcyclopropylglycine (mCPG) residues from isoleucine residues residing in the repeating TIGSVS motif of the precursor peptide TigB. Is thus involved in the maturation of a ribosomally synthesized and post-translationally modified peptide (RiPP). The polypeptide is Radical SAM cyclopropyl synthase TigE (Paramaledivibacter caminithermalis (strain DSM 15212 / CIP 107654 / DViRD3) (Clostridium caminithermale)).